Here is a 290-residue protein sequence, read N- to C-terminus: Short chain dehydrogenase andI (290 aa).

The NADP(+) site is built by Ile-35, Asn-120, Arg-154, Tyr-186, Lys-190, Val-219, and Thr-221. Tyr-186 acts as the Proton acceptor in catalysis. Lys-190 (lowers pKa of active site Tyr) is an active-site residue.

Belongs to the short-chain dehydrogenases/reductases (SDR) family.

The protein operates within secondary metabolite biosynthesis; terpenoid biosynthesis. Its function is as follows. Short chain dehydrogenase; part of the gene cluster that mediates the biosynthesis of anditomin, a fungal meroterpenoid. The first step of the pathway is the synthesis of 3,5-dimethylorsellinic acid (DMOA) by the polyketide synthase andM. DMOA is then converted to the phthalide compound 5,7-dihydroxy-4,6-dimethylphthalide (DHDMP) by the cytochrome P450 monooxygenase andK, which is further prenylated by the prenyltransferase andD to yield farnesyl-DHDMP. Further epoxidation by the FAD-dependent monooxygenase andE leads to epoxyfarnesyl-DHDMP. The next step involves the terpene cyclase andB that converts epoxyfarnesyl-DHDMP into preandiloid A through opening of the epoxide ring followed by the cyclization of the farnesyl moiety. Preandiloid A is in turn oxidized at the C-3 hydroxyl group to yield preandiloid B by the dehydrogenase andC. The dioxygenase andA is solely responsible for the dehydrogenation of preandiloid B leading to the enone preandiloid C, as well as for the intriguing structural rearrangement to generate the bicyclo[2.2.2]octane core, transforming preandiloid C into andiconin. FAD-binding monooxygenase andJ then produces andilesin D which is reduced by dehydrogenase andI to yield andilesin A. Action of acetyltransferase andG followed by a spontaneous acetate elimination leads then to andilesin B, which is in turn substrate of the short chain dehydrogenase andH to yield andilesin C. Finally, the dioxygenase andF catalyzes the transformation of andilesin C to anditomin. The chain is Short chain dehydrogenase andI from Emericella variicolor (Aspergillus stellatus).